A 560-amino-acid polypeptide reads, in one-letter code: Membrane protein insertase YidC (560 aa).

Helical transmembrane passes span 5–25 (IINLIAAIILSLSIIFGWQYF), 334–354 (AIDFGWFYIITKPVFYAMNFF), 357–377 (YVGNFGVSILIVTVIIKLLMF), 431–451 (LPILVQIPVFFSIYKVLYVTI), 476–496 (LFGLLPFSPPLFLMIGAWPIL), and 522–542 (FMPLIFLFMFSSFPVGLLIYW).

Belongs to the OXA1/ALB3/YidC family. Type 1 subfamily. As to quaternary structure, interacts with the Sec translocase complex via SecD. Specifically interacts with transmembrane segments of nascent integral membrane proteins during membrane integration.

The protein localises to the cell inner membrane. Functionally, required for the insertion and/or proper folding and/or complex formation of integral membrane proteins into the membrane. Involved in integration of membrane proteins that insert both dependently and independently of the Sec translocase complex, as well as at least some lipoproteins. Aids folding of multispanning membrane proteins. The sequence is that of Membrane protein insertase YidC from Rickettsia africae (strain ESF-5).